Here is a 1171-residue protein sequence, read N- to C-terminus: DNA-directed RNA polymerase subunit beta (1171 aa).

The protein belongs to the RNA polymerase beta chain family. The RNAP catalytic core consists of 2 alpha, 1 beta, 1 beta' and 1 omega subunit. When a sigma factor is associated with the core the holoenzyme is formed, which can initiate transcription.

The enzyme catalyses RNA(n) + a ribonucleoside 5'-triphosphate = RNA(n+1) + diphosphate. DNA-dependent RNA polymerase catalyzes the transcription of DNA into RNA using the four ribonucleoside triphosphates as substrates. In Corynebacterium efficiens (strain DSM 44549 / YS-314 / AJ 12310 / JCM 11189 / NBRC 100395), this protein is DNA-directed RNA polymerase subunit beta.